Here is a 625-residue protein sequence, read N- to C-terminus: DELLA protein SLR1 (625 aa).

The disordered stretch occupies residues 1–34 (MKREYQEAGGSSGGGSSADMGSCKDKVMAGAAGE). Residues 39–43 (DELLA) carry the DELLA motif motif. The interval 167–209 (TADPSAADSARDTKRMRTGGGSTSSSSSSSSSLGGGASRGSVV) is disordered. Residues 189–198 (TSSSSSSSSS) show a composition bias toward low complexity. The GRAS domain occupies 232–621 (VDTQEAGIRL…RPLIATSAWR (390 aa)). Positions 239–294 (IRLVHALLACAEAVQQENFAAAEALVKQIPTLAASQGGAMRKVAAYFGEALARRVY) are leucine repeat I (LRI). The segment at 241 to 278 (LVHALLACAEAVQQENFAAAEALVKQIPTLAASQGGAM) is required for possible homodimerization. The short motif at 246-250 (LACAE) is the LxCxE motif element. The interval 313–378 (HAHFYESCPY…GGPPSFRLTG (66 aa)) is VHIID. Positions 344 to 348 (VHVVD) match the VHIID motif. Residues 392 to 431 (QVGWKLAQFAHTIRVDFQYRGLVAATLADLEPFMLQPEGE) form a leucine repeat II (LRII) region. Positions 441 to 542 (IAVNSVFELH…EVYLGRQICN (102 aa)) are PFYRE. The LXXLL motif motif lies at 449-453 (LHRLL). Positions 545–621 (ACEGAERTER…RPLIATSAWR (77 aa)) are SAW.

The protein belongs to the GRAS family. DELLA subfamily. In terms of assembly, may be a homodimer. Interacts directly with the GID2 component of the SCF(GID2) complex. Interacts with GID1 in a GA-dependent manner, probably leading to its interaction with GID2 and its subsequent degradation. Interacts with D14 and GID1 in an strigolactone-dependent manner. Interacts with HD16/EL1. In terms of processing, phosphorylated on Ser/Thr residues in the N-terminal part. Both phosphorylated and unphosphorylated forms are degraded upon GA treatment, suggesting that phosphorylation does not trigger ubiquitination. Phosphorylated by HD16/EL1. Phosphorylation enhances its stability. Ubiquitinated. Upon GA application it is ubiquitinated by the SCF(GID2) complex, leading to its subsequent degradation. Expressed in nodes, internodes, leaf sheats of young seedlings and ears of adult plants. Weakly expressed in leaf blade and root.

It is found in the nucleus. Its function is as follows. Probable transcriptional regulator that acts as a repressor of the gibberellin (GA) signaling pathway. Probably acts by participating in large multiprotein complexes that repress transcription of GA-inducible genes. Upon GA application, it is degraded by the proteasome, allowing the GA signaling pathway. In contrast, its overexpression prevents the GA signaling pathway and induces a dwarf phenotype. This chain is DELLA protein SLR1, found in Oryza sativa subsp. japonica (Rice).